Reading from the N-terminus, the 297-residue chain is Phosphoribosylaminoimidazole-succinocarboxamide synthase (297 aa).

It belongs to the SAICAR synthetase family.

It catalyses the reaction 5-amino-1-(5-phospho-D-ribosyl)imidazole-4-carboxylate + L-aspartate + ATP = (2S)-2-[5-amino-1-(5-phospho-beta-D-ribosyl)imidazole-4-carboxamido]succinate + ADP + phosphate + 2 H(+). The protein operates within purine metabolism; IMP biosynthesis via de novo pathway; 5-amino-1-(5-phospho-D-ribosyl)imidazole-4-carboxamide from 5-amino-1-(5-phospho-D-ribosyl)imidazole-4-carboxylate: step 1/2. This is Phosphoribosylaminoimidazole-succinocarboxamide synthase from Corynebacterium glutamicum (strain ATCC 13032 / DSM 20300 / JCM 1318 / BCRC 11384 / CCUG 27702 / LMG 3730 / NBRC 12168 / NCIMB 10025 / NRRL B-2784 / 534).